A 529-amino-acid chain; its full sequence is Apolipoprotein N-acyltransferase (529 aa).

5 helical membrane-spanning segments follow: residues 8-28, 66-86, 105-125, 178-198, and 203-223; these read VMLAGGMSRAVMAIAAGAVGA, ILPAFGIGWCFGFGYFVAGLW, LAILGLPALLALFYGFAVAAA, LLGLLSITTLAVFIFASPALI, and GMGPGLALAGLLLAAHFGYGF. Positions 242 to 491 constitute a CN hydrolase domain; sequence VQPAIDQSRK…VGILDATLSG (250 aa). Catalysis depends on E286, which acts as the Proton acceptor. K350 is an active-site residue. C403 functions as the Nucleophile in the catalytic mechanism. Residues 505-525 form a helical membrane-spanning segment; it reads YFWLIFSILMIVAVFPALSFA.

It belongs to the CN hydrolase family. Apolipoprotein N-acyltransferase subfamily.

It is found in the cell inner membrane. The catalysed reaction is N-terminal S-1,2-diacyl-sn-glyceryl-L-cysteinyl-[lipoprotein] + a glycerophospholipid = N-acyl-S-1,2-diacyl-sn-glyceryl-L-cysteinyl-[lipoprotein] + a 2-acyl-sn-glycero-3-phospholipid + H(+). Its pathway is protein modification; lipoprotein biosynthesis (N-acyl transfer). Catalyzes the phospholipid dependent N-acylation of the N-terminal cysteine of apolipoprotein, the last step in lipoprotein maturation. The chain is Apolipoprotein N-acyltransferase from Agrobacterium fabrum (strain C58 / ATCC 33970) (Agrobacterium tumefaciens (strain C58)).